A 259-amino-acid polypeptide reads, in one-letter code: Glucosamine-6-phosphate deaminase (259 aa).

Asp-66 functions as the Proton acceptor; for enolization step in the catalytic mechanism. Catalysis depends on Asp-135, which acts as the For ring-opening step. The active-site Proton acceptor; for ring-opening step is the His-137. Glu-142 serves as the catalytic For ring-opening step.

Belongs to the glucosamine/galactosamine-6-phosphate isomerase family. NagB subfamily.

It carries out the reaction alpha-D-glucosamine 6-phosphate + H2O = beta-D-fructose 6-phosphate + NH4(+). It functions in the pathway amino-sugar metabolism; N-acetylneuraminate degradation; D-fructose 6-phosphate from N-acetylneuraminate: step 5/5. Catalyzes the reversible isomerization-deamination of glucosamine 6-phosphate (GlcN6P) to form fructose 6-phosphate (Fru6P) and ammonium ion. The protein is Glucosamine-6-phosphate deaminase of Pseudarthrobacter chlorophenolicus (strain ATCC 700700 / DSM 12829 / CIP 107037 / JCM 12360 / KCTC 9906 / NCIMB 13794 / A6) (Arthrobacter chlorophenolicus).